A 199-amino-acid polypeptide reads, in one-letter code: dITP/XTP pyrophosphatase (199 aa).

Thr8–Lys13 lines the substrate pocket. Residues Glu41 and Asp70 each coordinate Mg(2+). Asp70 acts as the Proton acceptor in catalysis. Residues Ser71, Phe153 to Asp156, Lys176, and His181 to Arg182 each bind substrate.

This sequence belongs to the HAM1 NTPase family. As to quaternary structure, homodimer. Mg(2+) is required as a cofactor.

The catalysed reaction is XTP + H2O = XMP + diphosphate + H(+). It catalyses the reaction dITP + H2O = dIMP + diphosphate + H(+). It carries out the reaction ITP + H2O = IMP + diphosphate + H(+). Functionally, pyrophosphatase that catalyzes the hydrolysis of nucleoside triphosphates to their monophosphate derivatives, with a high preference for the non-canonical purine nucleotides XTP (xanthosine triphosphate), dITP (deoxyinosine triphosphate) and ITP. Seems to function as a house-cleaning enzyme that removes non-canonical purine nucleotides from the nucleotide pool, thus preventing their incorporation into DNA/RNA and avoiding chromosomal lesions. The sequence is that of dITP/XTP pyrophosphatase from Geobacter sulfurreducens (strain ATCC 51573 / DSM 12127 / PCA).